Reading from the N-terminus, the 477-residue chain is UDP-N-acetylglucosamine pyrophosphorylase (477 aa).

The short motif at 109-112 is the Substrate binding element; the sequence is MAGG. Residues 109–112, lysine 123, and glutamine 194 each bind UTP; that span reads MAGG. At serine 218 the chain carries Phosphoserine. Residue glycine 221 participates in UTP binding. Asparagine 222 lines the substrate pocket. UTP is bound at residue aspartate 252. The short motif at 302 to 303 is the Substrate binding element; the sequence is EY. Lysine 377 contacts UTP. Lysine 409 contacts substrate. Serine 461 is subject to Phosphoserine.

Belongs to the UDPGP type 1 family.

The protein resides in the cytoplasm. It carries out the reaction N-acetyl-alpha-D-glucosamine 1-phosphate + UTP + H(+) = UDP-N-acetyl-alpha-D-glucosamine + diphosphate. Its pathway is nucleotide-sugar biosynthesis; UDP-N-acetyl-alpha-D-glucosamine biosynthesis; UDP-N-acetyl-alpha-D-glucosamine from N-acetyl-alpha-D-glucosamine 1-phosphate: step 1/1. In terms of biological role, UDP-N-acetylglucosamine pyrophosphorylase that utilizes N-acetylglucosamine-1-phosphate as substrate. Together with AGM1, is involved in the production of UDP-N-acetylglucosamine from N-acetylglucosamine-6-phosphate. The sequence is that of UDP-N-acetylglucosamine pyrophosphorylase (QRI1) from Saccharomyces cerevisiae (strain ATCC 204508 / S288c) (Baker's yeast).